A 305-amino-acid polypeptide reads, in one-letter code: Phosphoinositol dihydroceramide synthase (305 aa).

The N-terminal stretch at 1–23 (MPSKKETLTVIVIMALFLLLTAA) is a signal peptide. Cys-24 carries the N-palmitoyl cysteine lipid modification. A lipid anchor (S-diacylglycerol cysteine) is attached at Cys-24. A run of 6 helical transmembrane segments spans residues 41–61 (LFFA…FAIF), 117–137 (VFAG…GLCL), 149–169 (FALV…IHPA), 216–236 (FAAV…YAII), 241–261 (WYVI…AIYS), and 266–286 (IIDV…FEYG).

The protein resides in the membrane. It carries out the reaction N-(2-hydroxy-fatty acyl)-dihydroceramide + a 1,2-diacyl-sn-glycero-3-phospho-(1D-myo-inositol) = inositol-1-phospho-N-(2-hydroxy-fatty acyl)-dihydroceramide + a 1,2-diacyl-sn-glycerol. Catalyzes the addition of a phosphorylinositol group onto dihydroceramide to form phosphoinositol dihydroceramide (PI-DHC), an essential step in sphingolipid biosynthesis. This Bacteroides thetaiotaomicron (strain ATCC 29148 / DSM 2079 / JCM 5827 / CCUG 10774 / NCTC 10582 / VPI-5482 / E50) protein is Phosphoinositol dihydroceramide synthase.